A 439-amino-acid polypeptide reads, in one-letter code: Histidinol dehydrogenase (439 aa).

NAD(+)-binding residues include Y125, Q187, and N210. Positions 233, 255, and 258 each coordinate substrate. Residues Q255 and H258 each contribute to the Zn(2+) site. Residues E323 and H324 each act as proton acceptor in the active site. The substrate site is built by H324, D357, E411, and H416. D357 contacts Zn(2+). H416 lines the Zn(2+) pocket.

It belongs to the histidinol dehydrogenase family. Zn(2+) serves as cofactor.

The enzyme catalyses L-histidinol + 2 NAD(+) + H2O = L-histidine + 2 NADH + 3 H(+). Its pathway is amino-acid biosynthesis; L-histidine biosynthesis; L-histidine from 5-phospho-alpha-D-ribose 1-diphosphate: step 9/9. Its function is as follows. Catalyzes the sequential NAD-dependent oxidations of L-histidinol to L-histidinaldehyde and then to L-histidine. This Symbiobacterium thermophilum (strain DSM 24528 / JCM 14929 / IAM 14863 / T) protein is Histidinol dehydrogenase.